A 71-amino-acid chain; its full sequence is Ribosome modulation factor (71 aa).

It belongs to the ribosome modulation factor family.

It localises to the cytoplasm. During stationary phase, converts 70S ribosomes to an inactive dimeric form (100S ribosomes). In Pseudomonas savastanoi pv. phaseolicola (strain 1448A / Race 6) (Pseudomonas syringae pv. phaseolicola (strain 1448A / Race 6)), this protein is Ribosome modulation factor.